Consider the following 303-residue polypeptide: Putative fimbrium subunit Fim1C (303 aa).

An N-terminal signal peptide occupies residues 1 to 22; sequence MKKQALICALLATVLLPGCSED.

Belongs to the bacteroidetes fimbrillin superfamily. Mfa-like family. In terms of assembly, may be part of the fimbrial tip.

It localises to the fimbrium. Functionally, putative component of the fimbrium tip. Fimbriae are filamentous appendages on the cell surface that mediate cell adhesion and biofilm formation. In Bacteroides uniformis (strain ATCC 8492 / DSM 6597 / CCUG 4942 / CIP 103695 / JCM 5828 / KCTC 5204 / NCTC 13054 / VPI 0061), this protein is Putative fimbrium subunit Fim1C (fim1C).